Reading from the N-terminus, the 200-residue chain is GTP cyclohydrolase-2 (200 aa).

GTP is bound at residue 50–54; that stretch reads RVHSE. Zn(2+) contacts are provided by C55, C66, and C68. GTP is bound by residues Q71, 93–95, and T115; that span reads EGR. D127 (proton acceptor) is an active-site residue. R129 acts as the Nucleophile in catalysis. Positions 150 and 155 each coordinate GTP.

Belongs to the GTP cyclohydrolase II family. It depends on Zn(2+) as a cofactor.

The catalysed reaction is GTP + 4 H2O = 2,5-diamino-6-hydroxy-4-(5-phosphoribosylamino)-pyrimidine + formate + 2 phosphate + 3 H(+). It participates in cofactor biosynthesis; riboflavin biosynthesis; 5-amino-6-(D-ribitylamino)uracil from GTP: step 1/4. In terms of biological role, catalyzes the conversion of GTP to 2,5-diamino-6-ribosylamino-4(3H)-pyrimidinone 5'-phosphate (DARP), formate and pyrophosphate. This chain is GTP cyclohydrolase-2, found in Acinetobacter baumannii (strain AB307-0294).